A 134-amino-acid polypeptide reads, in one-letter code: Putative oxidoreductase CatD (134 aa).

Transmembrane regions (helical) follow at residues 5–25 (FEIG…VHGL), 46–66 (FMAY…FFGL), 70–90 (IVGV…KLKA), and 91–111 (PFMG…HLAL).

It belongs to the DoxX family.

The protein resides in the cell membrane. In terms of biological role, essential for growth and viability in the presence of catechol and probably involved in the detoxification of catechol. This chain is Putative oxidoreductase CatD (catD), found in Bacillus subtilis (strain 168).